A 360-amino-acid polypeptide reads, in one-letter code: Mannose-1-phosphate guanylyltransferase catalytic subunit beta (360 aa).

The interval 2 to 222 (KALILVGGYG…QGFWMDIGQP (221 aa)) is substrate-binding domain. Position 110 (D110) interacts with GDP-alpha-D-mannose. Residue D110 coordinates Mg(2+). The active site involves K162. D218 serves as a coordination point for GDP-alpha-D-mannose. Residue D218 participates in Mg(2+) binding. The hexapeptide repeat domain stretch occupies residues 245 to 360 (CSGPGIVGNV…ESVPEPGIIM (116 aa)).

This sequence belongs to the transferase hexapeptide repeat family. Component of the GMPPA-GMPPB mannose-1-phosphate guanylyltransferase complex composed of 4 GMPPA subunits and 8 GMPPB subunits; the complex is organized into three layers, a central layer made up of 2 GMPPA dimers sandwiched between two layers each made up of 2 GMPPB dimers. GMPPB catalytic activity is reduced when part of the complex and binding of GDP-alpha-D-Mannose by GMPPA induces allosteric feedback inhibition of GMPPB. Mg(2+) is required as a cofactor. As to expression, expressed in the liver (at protein level).

The protein localises to the cytoplasm. The enzyme catalyses alpha-D-mannose 1-phosphate + GTP + H(+) = GDP-alpha-D-mannose + diphosphate. It participates in nucleotide-sugar biosynthesis; GDP-alpha-D-mannose biosynthesis; GDP-alpha-D-mannose from alpha-D-mannose 1-phosphate (GTP route): step 1/1. Enzyme activity is reduced by incorporation into the GMPPA-GMPPB mannose-1-phosphate guanylyltransferase complex. Allosterically inhibited, when part of the GMPPA-GMPPB complex, by GDP-alpha-D-mannose binding to GMPPA. In terms of biological role, catalytic subunit of the GMPPA-GMPPB mannose-1-phosphate guanylyltransferase complex. Catalyzes the formation of GDP-mannose, an essential precursor of glycan moieties of glycoproteins and glycolipids. Can catalyze the reverse reaction in vitro. Together with GMPPA regulates GDP-alpha-D-mannose levels. The polypeptide is Mannose-1-phosphate guanylyltransferase catalytic subunit beta (Sus scrofa (Pig)).